The chain runs to 176 residues: Large ribosomal subunit protein eL20 (176 aa).

Belongs to the eukaryotic ribosomal protein eL20 family. Component of the large ribosomal subunit.

It is found in the cytoplasm. In terms of biological role, component of the large ribosomal subunit. The ribosome is a large ribonucleoprotein complex responsible for the synthesis of proteins in the cell. The polypeptide is Large ribosomal subunit protein eL20 (rpl18a) (Ictalurus punctatus (Channel catfish)).